The sequence spans 299 residues: Protease HtpX homolog (299 aa).

Helical transmembrane passes span 14–34 and 39–59; these read ILVMAGFVFLVALIGAAVGYL and ATGGVIIALVIAVIYVSIMVG. Position 144 (His144) interacts with Zn(2+). Glu145 is an active-site residue. His148 is a binding site for Zn(2+). Transmembrane regions (helical) follow at residues 159–179 and 196–216; these read IALALTAAISLLVNFAGNFMW and VFAIIGSILLIILAPLAATMV. Residue Glu225 participates in Zn(2+) binding.

This sequence belongs to the peptidase M48B family. Requires Zn(2+) as cofactor.

It localises to the cell membrane. This chain is Protease HtpX homolog, found in Limosilactobacillus fermentum (strain NBRC 3956 / LMG 18251) (Lactobacillus fermentum).